The following is a 69-amino-acid chain: SRRCPGKNAWPELVGKSGNMAAATVERENRNVHAIVLKEGSAMTKDFRCDRVWVIVNDHGVVTSVPHIT.

The residue at position 1 (S1) is an N-acetylserine. An intrachain disulfide couples C4 to C49.

Its function is as follows. In vitro, strong inhibitor of bovine beta-trypsin, weak inhibitor of alpha-chymotrypsin, subtilisin BPN', subtilisin Carlsberg and cathepsin G. In Linum usitatissimum (Flax), this protein is Proteinase inhibitor.